The chain runs to 318 residues: L-malyl-CoA/beta-methylmalyl-CoA lyase (318 aa).

Phe-19, Arg-24, Lys-30, and Arg-76 together coordinate substrate. Glu-141 and Asp-168 together coordinate Mg(2+). Substrate is bound by residues 167-168 and 251-252; these read AD and IH.

This sequence belongs to the HpcH/HpaI aldolase family. Homohexamer. Dimer of trimers. Requires Mg(2+) as cofactor. Mn(2+) serves as cofactor.

It carries out the reaction (S)-malyl-CoA = glyoxylate + acetyl-CoA. The catalysed reaction is (2R,3S)-beta-methylmalyl-CoA = propanoyl-CoA + glyoxylate. In vitro inhibited by EDTA. In terms of biological role, involved in the ethylmalonyl-CoA pathway for acetate assimilation. Catalyzes the reversible condensation of glyoxylate and acetyl-CoA to L-malyl-CoA and the reversible condensation of glyoxylate and propionyl-CoA to beta-methylmalyl-CoA. This chain is L-malyl-CoA/beta-methylmalyl-CoA lyase, found in Rhodobacter capsulatus (Rhodopseudomonas capsulata).